A 322-amino-acid chain; its full sequence is ATP-dependent 6-phosphofructokinase (322 aa).

Residues Gly12, 73 to 74, and 103 to 106 each bind ATP; these read RF and GDGT. Asp104 serves as a coordination point for Mg(2+). A substrate-binding site is contributed by 126-128; the sequence is TID. Asp128 serves as the catalytic Proton acceptor. Position 155 (Arg155) interacts with ADP. Substrate contacts are provided by residues Arg163 and 170 to 172; that span reads MGR. Residues 186–188, Lys212, and 214–216 contribute to the ADP site; these read GSE and KPS. Residues Glu223, Arg245, and 251-254 each bind substrate; that span reads HTQR.

Belongs to the phosphofructokinase type A (PFKA) family. ATP-dependent PFK group I subfamily. Prokaryotic clade 'B1' sub-subfamily. Homotetramer. It depends on Mg(2+) as a cofactor.

It localises to the cytoplasm. The enzyme catalyses beta-D-fructose 6-phosphate + ATP = beta-D-fructose 1,6-bisphosphate + ADP + H(+). It functions in the pathway carbohydrate degradation; glycolysis; D-glyceraldehyde 3-phosphate and glycerone phosphate from D-glucose: step 3/4. With respect to regulation, allosterically activated by ADP and other diphosphonucleosides, and allosterically inhibited by phosphoenolpyruvate. In terms of biological role, catalyzes the phosphorylation of D-fructose 6-phosphate to fructose 1,6-bisphosphate by ATP, the first committing step of glycolysis. The protein is ATP-dependent 6-phosphofructokinase of Mesomycoplasma hyopneumoniae (strain 7448) (Mycoplasma hyopneumoniae).